The following is a 134-amino-acid chain: Small ribosomal subunit protein uS8c (134 aa).

It belongs to the universal ribosomal protein uS8 family. In terms of assembly, part of the 30S ribosomal subunit.

The protein localises to the plastid. Its subcellular location is the chloroplast. Its function is as follows. One of the primary rRNA binding proteins, it binds directly to 16S rRNA central domain where it helps coordinate assembly of the platform of the 30S subunit. The polypeptide is Small ribosomal subunit protein uS8c (rps8) (Aethionema cordifolium (Lebanon stonecress)).